Consider the following 215-residue polypeptide: Small ribosomal subunit protein uS3 (215 aa).

One can recognise a KH type-2 domain in the interval 39–107 (VRQYLQKKLA…PVHINIEEIR (69 aa)).

It belongs to the universal ribosomal protein uS3 family. Part of the 30S ribosomal subunit. Forms a tight complex with proteins S10 and S14.

Functionally, binds the lower part of the 30S subunit head. Binds mRNA in the 70S ribosome, positioning it for translation. In Nitrosomonas europaea (strain ATCC 19718 / CIP 103999 / KCTC 2705 / NBRC 14298), this protein is Small ribosomal subunit protein uS3.